A 305-amino-acid polypeptide reads, in one-letter code: Glutaminase (305 aa).

Residues S61, N113, E158, N165, Y189, Y241, and V259 each coordinate substrate.

The protein belongs to the glutaminase family. As to quaternary structure, homotetramer.

It catalyses the reaction L-glutamine + H2O = L-glutamate + NH4(+). The chain is Glutaminase from Clostridium botulinum (strain 657 / Type Ba4).